The primary structure comprises 1030 residues: Importin beta-like SAD2 homolog (1030 aa).

Met1 is subject to N-acetylmethionine. Residues 25–99 form the Importin N-terminal domain; sequence AEQSLNQLQH…RNQILVFVSQ (75 aa). Disordered regions lie at residues 886–928 and 940–964; these read AAKA…GSTL and SYSD…PIDE. Acidic residues-rich tracts occupy residues 890 to 924 and 943 to 964; these read EEEE…DETD and DDDD…PIDE.

It belongs to the importin beta family.

The protein localises to the cytoplasm. It is found in the nucleus. Its function is as follows. Functions probably in nuclear protein import, either by acting as autonomous nuclear transport receptor or as an adapter-like protein in association with other importin subunits. The chain is Importin beta-like SAD2 homolog from Arabidopsis thaliana (Mouse-ear cress).